We begin with the raw amino-acid sequence, 337 residues long: Dehydrogenase FUB6 (337 aa).

The protein belongs to the zinc-containing alcohol dehydrogenase family. Quinone oxidoreductase subfamily.

The protein operates within mycotoxin biosynthesis. In terms of biological role, dehydrogenase; part of the gene cluster that mediates the biosynthesis of fusaric acid, a mycotoxin with low to moderate toxicity to animals and humans, but with high phytotoxic properties. L-aspartate is suggested as fusaric acid amino acid precursor that is activated and further processed to O-acetyl-L-homoserine by cluster enzymes aspartate kinase FUB3 and homoserine O-acetyltransferase FUB5, as well as enzymes of the primary metabolism. The polyketide synthase (PKS) FUB1 generates the triketide trans-2-hexenal which is presumptively released by the hydrolase FUB4 and linked to the NRPS-bound amino acid precursor by NAD(P)-dependent dehydrogenase FUB6. FUB1, FUB4, and the non-canonical NRPS Fub8 may form an enzyme complex. Further processing of the NRPS-bound intermediate might be carried out by FUB6 and the O-acetylhomoserine FUB7, enabling a spontaneous electrocyclization to close the carbon backbone of fusaric acid. Dihydrofusaric acid is likely to be released via reduction by the thioester reductase (TR) domain of FUB8 whereupon the final oxidation to fusaric acid may (also) be performed by the FMN-dependent dehydrogenase FUB9. The sequence is that of Dehydrogenase FUB6 from Gibberella fujikuroi (strain CBS 195.34 / IMI 58289 / NRRL A-6831) (Bakanae and foot rot disease fungus).